A 295-amino-acid polypeptide reads, in one-letter code: Indole-3-glycerol phosphate synthase (295 aa).

It belongs to the TrpC family.

The catalysed reaction is 1-(2-carboxyphenylamino)-1-deoxy-D-ribulose 5-phosphate + H(+) = (1S,2R)-1-C-(indol-3-yl)glycerol 3-phosphate + CO2 + H2O. The protein operates within amino-acid biosynthesis; L-tryptophan biosynthesis; L-tryptophan from chorismate: step 4/5. This Prochlorococcus marinus (strain MIT 9515) protein is Indole-3-glycerol phosphate synthase.